Reading from the N-terminus, the 517-residue chain is 3-hydroxyphenylacetate 6-hydroxylase (517 aa).

Heme is bound at residue Cys-449.

This sequence belongs to the cytochrome P450 family.

The enzyme catalyses 3-hydroxyphenylacetate + NADH + O2 + H(+) = homogentisate + NAD(+) + H2O. The catalysed reaction is 3-hydroxyphenylacetate + NADPH + O2 + H(+) = homogentisate + NADP(+) + H2O. It catalyses the reaction 3,4-dihydroxyphenylacetate + NADH + O2 + H(+) = 2,4,5-trihydroxyphenylacetate + NAD(+) + H2O. It carries out the reaction 3,4-dihydroxyphenylacetate + NADPH + O2 + H(+) = 2,4,5-trihydroxyphenylacetate + NADP(+) + H2O. Its pathway is aromatic compound metabolism; phenylacetate degradation. Functionally, catalyzes the hydroxylation of 3-hydroxyphenylacetate and 3,4-dihydroxyphenylacetate to 2,5-dihydroxyphenylacetate (homogentisate) and 2,4,5-trihydroxyphenylacetate, respectively. Both of these compounds are used as substrate by homogentisate dioxygenase in the homogentisate pathway. The homogentisate pathway is used to catabolize phenylacetate and use it as a carbon source. Can also catalyze the hydroxylation of phenylacetate to 2-hydroxyphenylacetate at low efficiency to compensate for loss of phacA. The polypeptide is 3-hydroxyphenylacetate 6-hydroxylase (phacB) (Emericella nidulans (Aspergillus nidulans)).